Consider the following 474-residue polypeptide: Protein nucleotidyltransferase YdiU (474 aa).

The ATP site is built by Gly-89, Gly-91, Arg-92, Lys-112, Asp-124, Gly-125, Arg-175, and Arg-182. The Proton acceptor role is filled by Asp-256. Residues Asn-257 and Asp-266 each contribute to the Mg(2+) site. Residue Asp-266 coordinates ATP.

This sequence belongs to the SELO family. The cofactor is Mg(2+). Mn(2+) is required as a cofactor.

The enzyme catalyses L-seryl-[protein] + ATP = 3-O-(5'-adenylyl)-L-seryl-[protein] + diphosphate. The catalysed reaction is L-threonyl-[protein] + ATP = 3-O-(5'-adenylyl)-L-threonyl-[protein] + diphosphate. It catalyses the reaction L-tyrosyl-[protein] + ATP = O-(5'-adenylyl)-L-tyrosyl-[protein] + diphosphate. It carries out the reaction L-histidyl-[protein] + UTP = N(tele)-(5'-uridylyl)-L-histidyl-[protein] + diphosphate. The enzyme catalyses L-seryl-[protein] + UTP = O-(5'-uridylyl)-L-seryl-[protein] + diphosphate. The catalysed reaction is L-tyrosyl-[protein] + UTP = O-(5'-uridylyl)-L-tyrosyl-[protein] + diphosphate. Its function is as follows. Nucleotidyltransferase involved in the post-translational modification of proteins. It can catalyze the addition of adenosine monophosphate (AMP) or uridine monophosphate (UMP) to a protein, resulting in modifications known as AMPylation and UMPylation. The sequence is that of Protein nucleotidyltransferase YdiU from Corynebacterium glutamicum (strain R).